Here is a 739-residue protein sequence, read N- to C-terminus: MGITKTSPNTTILLKTFHNNSMSQDYHHHHHHNQHQGGIFNFSNGFDRSDSPNLTTQQKQEHQRVEMDEESSVAGGRIPVYESAGMLSEMFNFPGSSGGGRDLDLGQSFRSNRQLLEEQHQNIPAMNATDSATATAAAMQLFLMNPPPPQQPPSPSSTTSPRSHHNSSTLHMLLPSPSTNTTHHQNYTNHMSMHQLPHQHHQQISTWQSSPDHHHHHHNSQTEIGTVHVENSGGHGGQGLSLSLSSSLEAAAKAEEYRNIYYGANSSNASPHHQYNQFKTLLANSSQHHHQVLNQFRSSPAASSSSMAAVNILRNSRYTTAAQELLEEFCSVGRGFLKKNKLGNSSNPNTCGGDGGGSSPSSAGANKEHPPLSASDRIEHQRRKVKLLTMLEEVDRRYNHYCEQMQMVVNSFDIVMGHGAALPYTALAQKAMSRHFRCLKDAVAAQLKQSCELLGDKDAAGISSSGLTKGETPRLRLLEQSLRQNRAFHQMGMMEQEAWRPQRGLPERSVNILRAWLFEHFLHPYPSDADKHLLARQTGLSRNQVSNWFINARVRLWKPMVEEMYQQESKEREREEELEENEEDQETKNSNDDKSTKSNNNESNFTAVRTTSQTPTTTAPDASDADAAVATGHRLRSNINAYENDASSLLLPSSYSNAAAPAAVSDDLNSRYGGSDAFSAVATCQQSVGGFDDADMDGVNVIRFGTNPTGDVSLTLGLRHAGNMPDKDASFCVREFGGF.

2 disordered regions span residues 23-73 (SQDY…ESSV) and 143-222 (LMNP…NSQT). Over residues 41-58 (NFSNGFDRSDSPNLTTQQ) the composition is skewed to polar residues. Residues 145-155 (NPPPPQQPPSP) are compositionally biased toward pro residues. Residues 179 to 190 (TNTTHHQNYTNH) show a composition bias toward low complexity. The SR/KY domain stretch occupies residues 316-332 (SRYTTAAQELLEEFCSV). The disordered stretch occupies residues 341–378 (KLGNSSNPNTCGGDGGGSSPSSAGANKEHPPLSASDRI). The interval 376–447 (DRIEHQRRKV…CLKDAVAAQL (72 aa)) is BELL domain. The homeobox DNA-binding region spans 498-560 (AWRPQRGLPE…NARVRLWKPM (63 aa)). Positions 567-627 (QESKEREREE…TAPDASDADA (61 aa)) are disordered. Residues 576 to 585 (EELEENEEDQ) are compositionally biased toward acidic residues. Basic and acidic residues predominate over residues 586 to 596 (ETKNSNDDKST). Low complexity predominate over residues 597-627 (KSNNNESNFTAVRTTSQTPTTTAPDASDADA).

Belongs to the TALE/BELL homeobox family. May form heterodimeric complexes with TALE/KNOX proteins STM, KNAT1/BP, KNAT2 and KNAT5. Interacts with OFP1, OFP2, OFP4 and OFP5. Interacts with KNATM, isoform KNATM-B. In terms of tissue distribution, expressed in lateral organs.

It localises to the nucleus. In terms of biological role, transcription factor that establishes leaf shape by repressing growth in specific subdomains of the leaf. Negatively regulates knox homeobox gene KNAT1/BP expression. This chain is BEL1-like homeodomain protein 2 (BLH2), found in Arabidopsis thaliana (Mouse-ear cress).